Consider the following 284-residue polypeptide: MAAVVFSLRRSGPVFRLPGVLQVCRGAQTAAAAAPASQAEARIKKFAIYRWDPDKPGDKPRMQTYEVDLNECGSMVLDALIKIKNEMDPTLTFRRSCREGICGSCAMNINGGNTLACTVRIDTNLSKVSKIYPLPHMYVVKDLVPDLSNFYAQYKSIEPYLKKKDESQEGKEQYLQSIEDRDKLDGLYECILCACCSTSCPSYWWNADKYLGPAVLMQAYRWMIDSRDDYTEERLAKLQDPFSLYRCHTIMNCTRTCPKGLNPGKAIAEIKKMMATYKERAASV.

A mitochondrion-targeting transit peptide spans 1-26 (MAAVVFSLRRSGPVFRLPGVLQVCRG). Positions 44 to 137 (KKFAIYRWDP…VSKIYPLPHM (94 aa)) constitute a 2Fe-2S ferredoxin-type domain. [2Fe-2S] cluster is bound by residues Cys97, Cys102, Cys105, and Cys117. Residues 180-210 (DRDKLDGLYECILCACCSTSCPSYWWNADKY) enclose the 4Fe-4S ferredoxin-type domain. Cys190, Cys193, and Cys196 together coordinate [4Fe-4S] cluster. A [3Fe-4S] cluster-binding site is contributed by Cys200. Residue Trp205 coordinates a ubiquinone. [3Fe-4S] cluster-binding residues include Cys247 and Cys253. Cys257 contributes to the [4Fe-4S] cluster binding site.

This sequence belongs to the succinate dehydrogenase/fumarate reductase iron-sulfur protein family. As to quaternary structure, component of complex II composed of four subunits: the flavoprotein (FP) sdha, iron-sulfur protein (IP) sdhb, and a cytochrome b composed of sdhc and sdhd. The cofactor is [2Fe-2S] cluster. Requires [3Fe-4S] cluster as cofactor. [4Fe-4S] cluster is required as a cofactor.

It localises to the mitochondrion inner membrane. It carries out the reaction a quinone + succinate = fumarate + a quinol. The enzyme catalyses (R)-malate + a quinone = enol-oxaloacetate + a quinol. It catalyses the reaction (S)-malate + a quinone = enol-oxaloacetate + a quinol. Its pathway is carbohydrate metabolism; tricarboxylic acid cycle; fumarate from succinate (eukaryal route): step 1/1. With respect to regulation, enol-oxaloacetate inhibits the succinate dehydrogenase activity. Its function is as follows. Iron-sulfur protein (IP) subunit of the succinate dehydrogenase complex (mitochondrial respiratory chain complex II), responsible for transferring electrons from succinate to ubiquinone (coenzyme Q). SDH also oxidizes malate to the non-canonical enol form of oxaloacetate, enol-oxaloacetate. Enol-oxaloacetate, which is a potent inhibitor of the succinate dehydrogenase activity, is further isomerized into keto-oxaloacetate. In Xenopus tropicalis (Western clawed frog), this protein is Succinate dehydrogenase [ubiquinone] iron-sulfur subunit, mitochondrial (sdhb).